The following is a 314-amino-acid chain: 3'-5' exoribonuclease YhaM (314 aa).

The HD domain maps to 163-279 (HVVSMLDLAK…LHYIDNLDAK (117 aa)).

It belongs to the YhaM family.

In terms of biological role, shows a 3'-5' exoribonuclease activity. This chain is 3'-5' exoribonuclease YhaM, found in Bacillus cereus (strain AH187).